The chain runs to 125 residues: Large ribosomal subunit protein mL51 (125 aa).

Residues 1 to 29 (MWSVQQLLWGCRSLLTQGCRSFSLGSRDL) constitute a mitochondrion transit peptide.

It belongs to the mitochondrion-specific ribosomal protein mL51 family. As to quaternary structure, component of the mitochondrial ribosome large subunit (39S) which comprises a 16S rRNA and about 50 distinct proteins.

The protein localises to the mitochondrion. The sequence is that of Large ribosomal subunit protein mL51 (mrpl51) from Xenopus tropicalis (Western clawed frog).